The following is a 158-amino-acid chain: Sec-independent protein translocase protein TatB (158 aa).

A helical membrane pass occupies residues 1–21 (MFGISFSELLLVGLVALLVLG). Residues 73–158 (DEARKMFAPN…HDSSLPPRAP (86 aa)) form a disordered region. Over residues 80 to 90 (APNQPSENSPE) the composition is skewed to low complexity.

The protein belongs to the TatB family. The Tat system comprises two distinct complexes: a TatABC complex, containing multiple copies of TatA, TatB and TatC subunits, and a separate TatA complex, containing only TatA subunits. Substrates initially bind to the TatABC complex, which probably triggers association of the separate TatA complex to form the active translocon.

The protein resides in the cell inner membrane. Its function is as follows. Part of the twin-arginine translocation (Tat) system that transports large folded proteins containing a characteristic twin-arginine motif in their signal peptide across membranes. Together with TatC, TatB is part of a receptor directly interacting with Tat signal peptides. TatB may form an oligomeric binding site that transiently accommodates folded Tat precursor proteins before their translocation. In Pseudomonas syringae pv. syringae (strain B728a), this protein is Sec-independent protein translocase protein TatB.